A 372-amino-acid chain; its full sequence is Sesquiterpene synthase Agr9 (372 aa).

4 residues coordinate Mg(2+): D87, N225, S229, and E233. Positions 87–91 (DEYTD) match the DDXXD motif motif. 2 residues coordinate (2E,6E)-farnesyl diphosphate: R314 and Y315.

It belongs to the terpene synthase family. Requires Mg(2+) as cofactor.

The enzyme catalyses (2E,6E)-farnesyl diphosphate = gamma-muurolene + diphosphate. It catalyses the reaction (2E,6E)-farnesyl diphosphate = delta-cadinene + diphosphate. Terpene cyclase that catalyzes the cyclization of farnesyl diphosphate (FPP) to various sesquiterpenes, including gamma-muurolene, beta-cadinene and delta-cadinene. This is Sesquiterpene synthase Agr9 from Cyclocybe aegerita (Black poplar mushroom).